The primary structure comprises 382 residues: MSQAFLPFSRPSIGDEEIAAVEQVLRSGWITTGPKNQALEEQFAQYVGSRHAVALSSATGAMHVTLLALGIGPGDEVITPSQTWVSTANMISLLGATPVFVDVDRDTLMTDAARIEAAITPRTKAIIPVHYAGAAFDLDPLYALADKHGIAVIEDAAHAAGTRYKGRHVGSQGTAIFSFHAIKNMTCAEGAMFVTDDEALANRVRMLKFHGLGVDAYDRLTHGRKPQAQVIEPGFKYNLADINAAIALVQLERLDAINARRTELATQYLQKLEGLPVQPLAVPNYPQQHAWHLFILRIDSERCGMDREAFMKGLQEQGIGTGIHFIATHLHTWYRQRAPHLSLPDTEWNSARLCSIPLFPDMTDQDLDRVVGAIEHLMGKRP.

N6-(pyridoxal phosphate)lysine is present on Lys-183.

This sequence belongs to the DegT/DnrJ/EryC1 family. ArnB subfamily. Homodimer. It depends on pyridoxal 5'-phosphate as a cofactor.

The catalysed reaction is UDP-4-amino-4-deoxy-beta-L-arabinose + 2-oxoglutarate = UDP-beta-L-threo-pentopyranos-4-ulose + L-glutamate. The protein operates within nucleotide-sugar biosynthesis; UDP-4-deoxy-4-formamido-beta-L-arabinose biosynthesis; UDP-4-deoxy-4-formamido-beta-L-arabinose from UDP-alpha-D-glucuronate: step 2/3. It participates in bacterial outer membrane biogenesis; lipopolysaccharide biosynthesis. Functionally, catalyzes the conversion of UDP-4-keto-arabinose (UDP-Ara4O) to UDP-4-amino-4-deoxy-L-arabinose (UDP-L-Ara4N). The modified arabinose is attached to lipid A and is required for resistance to polymyxin and cationic antimicrobial peptides. In Pseudomonas fluorescens (strain Pf0-1), this protein is UDP-4-amino-4-deoxy-L-arabinose--oxoglutarate aminotransferase.